Here is a 222-residue protein sequence, read N- to C-terminus: Endonuclease V (222 aa).

Mg(2+) is bound by residues aspartate 43 and aspartate 109.

It belongs to the endonuclease V family. It depends on Mg(2+) as a cofactor.

Its subcellular location is the cytoplasm. It catalyses the reaction Endonucleolytic cleavage at apurinic or apyrimidinic sites to products with a 5'-phosphate.. In terms of biological role, DNA repair enzyme involved in the repair of deaminated bases. Selectively cleaves double-stranded DNA at the second phosphodiester bond 3' to a deoxyinosine leaving behind the intact lesion on the nicked DNA. In Roseiflexus castenholzii (strain DSM 13941 / HLO8), this protein is Endonuclease V.